We begin with the raw amino-acid sequence, 1465 residues long: DNA polymerase III PolC-type (1465 aa).

The region spanning tyrosine 427–leucine 583 is the Exonuclease domain.

The protein belongs to the DNA polymerase type-C family. PolC subfamily.

It localises to the cytoplasm. It carries out the reaction DNA(n) + a 2'-deoxyribonucleoside 5'-triphosphate = DNA(n+1) + diphosphate. Required for replicative DNA synthesis. This DNA polymerase also exhibits 3' to 5' exonuclease activity. The chain is DNA polymerase III PolC-type from Streptococcus pyogenes serotype M12 (strain MGAS2096).